An 853-amino-acid polypeptide reads, in one-letter code: Transcription factor CPH2 (853 aa).

Disordered regions lie at residues 165-209 (EPPI…DKNS) and 296-353 (NMNP…VHHP). Positions 180-194 (TTTVSSTNSITNTTK) are enriched in low complexity. The bHLH domain maps to 205–274 (KDKNSHNMIE…TKATEYIKHL (70 aa)). Residues 301–315 (SLPPPPQQMQAPPQP) show a composition bias toward pro residues. Over residues 330-352 (TPASQYPSPQQQVSPTQQQTVHH) the composition is skewed to low complexity.

The protein resides in the nucleus. Its function is as follows. Transcription factor that positively controls filamentous growth, virulence, and invasiveness. Binds directly to the two SRE-1-like elements upstream of TEC1 and thus positively regulates expression of this important hyphal growth regulator. Functions independently of known signaling cascades involving EFG1. Also regulates gene expression during intestinal colonization but is not involved in host cell adhesion. This Candida albicans (strain SC5314 / ATCC MYA-2876) (Yeast) protein is Transcription factor CPH2 (CPH2).